A 251-amino-acid polypeptide reads, in one-letter code: Aspartate/glutamate leucyltransferase (251 aa).

It belongs to the R-transferase family. Bpt subfamily.

Its subcellular location is the cytoplasm. It carries out the reaction N-terminal L-glutamyl-[protein] + L-leucyl-tRNA(Leu) = N-terminal L-leucyl-L-glutamyl-[protein] + tRNA(Leu) + H(+). It catalyses the reaction N-terminal L-aspartyl-[protein] + L-leucyl-tRNA(Leu) = N-terminal L-leucyl-L-aspartyl-[protein] + tRNA(Leu) + H(+). Functions in the N-end rule pathway of protein degradation where it conjugates Leu from its aminoacyl-tRNA to the N-termini of proteins containing an N-terminal aspartate or glutamate. In Xanthomonas oryzae pv. oryzae (strain MAFF 311018), this protein is Aspartate/glutamate leucyltransferase.